A 543-amino-acid chain; its full sequence is Sarafotoxin (543 aa).

Residues 1–23 form the signal peptide; that stretch reads MALLPRLAAGGLLLLLALAALEG. The propeptide occupies 24-69; that stretch reads KPAPSALSQLLEKRSEDQAAAGRIIDGGDTKQAARDPSPQRNVEPL. The tract at residues 45–65 is disordered; that stretch reads GRIIDGGDTKQAARDPSPQRN. 12 consecutive repeat copies span residues 51–90, 91–130, 131–170, 171–210, 211–250, 251–290, 291–330, 331–370, 371–410, 411–450, 451–490, and 491–530. The segment at 51–530 is 12 X 40 AA tandem repeats; sequence GDTKQAARDP…LNFCHQDVIW (480 aa). 2 disulfides stabilise this stretch: Cys70–Cys84 and Cys72–Cys80. A propeptide spanning residues 92–109 is cleaved from the precursor; it reads DTKQAARDPSPQRNVEPL. 2 cysteine pairs are disulfide-bonded: Cys110–Cys124 and Cys112–Cys120. Residues 132–149 constitute a propeptide that is removed on maturation; it reads DTKQAARDPSPQRNVEPL. Cystine bridges form between Cys150–Cys164 and Cys152–Cys160. Positions 172–189 are excised as a propeptide; it reads DTKQAARDPSPQRNVEPL. 2 disulfide bridges follow: Cys190–Cys204 and Cys192–Cys200. The propeptide occupies 212–229; it reads DTKQAARDPSPQRNVEPL. Cystine bridges form between Cys230–Cys244 and Cys232–Cys240. Positions 252–269 are excised as a propeptide; the sequence is DTKQAARDPSPQRNVEPL. Cystine bridges form between Cys270–Cys284 and Cys272–Cys280. The propeptide occupies 292-309; the sequence is DTKQAARDPSPQRNVEPL. Intrachain disulfides connect Cys310–Cys324 and Cys312–Cys320. A propeptide spanning residues 332–349 is cleaved from the precursor; it reads DTKQAARDPSPQRNVEPL. Cystine bridges form between Cys350–Cys364 and Cys352–Cys360. Positions 372–389 are excised as a propeptide; the sequence is DTKQAARDPSPQRNVEPL. Cystine bridges form between Cys390-Cys404 and Cys392-Cys400. A propeptide spanning residues 412–429 is cleaved from the precursor; it reads DTKQAARDPSPQRNVEPL. 2 disulfides stabilise this stretch: Cys430–Cys444 and Cys432–Cys440. Positions 452–469 are excised as a propeptide; that stretch reads DTKQAARDPSPQRNVEPL. 2 disulfides stabilise this stretch: Cys470-Cys484 and Cys472-Cys480. Residues 492-509 constitute a propeptide that is removed on maturation; it reads DTKQAARDPSPQRNVEPL. 2 cysteine pairs are disulfide-bonded: Cys510/Cys524 and Cys512/Cys520. Positions 532–543 are excised as a propeptide; it reads NADTSANPEFLG.

This sequence belongs to the endothelin/sarafotoxin family. In terms of tissue distribution, expressed by the venom gland.

Its subcellular location is the secreted. Its function is as follows. Vasoconstrictor activity. These toxins cause cardiac arrest probably as a result of coronary vasospasm. Vasoconstrictor activity. Causes cardiac arrest probably as a result of coronary vasospasm. Displays high agonistic activities towards endothelin-2 receptor (EDNRB) (displays affinity in the picomolar range) and endothelin-1 receptor (EDNRA) (lower affinities). The chain is Sarafotoxin from Atractaspis engaddensis (Israeli burrowing asp).